We begin with the raw amino-acid sequence, 170 residues long: Large ribosomal subunit protein uL5 (170 aa).

The protein belongs to the universal ribosomal protein uL5 family. In terms of assembly, part of the 50S ribosomal subunit; contacts the 5S rRNA and probably tRNA. Forms a bridge to the 30S subunit in the 70S ribosome.

In terms of biological role, this is one of the proteins that bind and probably mediate the attachment of the 5S RNA into the large ribosomal subunit, where it forms part of the central protuberance. In the 70S ribosome it contacts protein S13 of the 30S subunit (bridge B1b), connecting the 2 subunits; this bridge is implicated in subunit movement. May contact the P site tRNA; the 5S rRNA and some of its associated proteins might help stabilize positioning of ribosome-bound tRNAs. The protein is Large ribosomal subunit protein uL5 of Methanobrevibacter smithii (strain ATCC 35061 / DSM 861 / OCM 144 / PS).